The following is a 1630-amino-acid chain: Patronin (1630 aa).

One can recognise a Calponin-homology (CH) domain in the interval 156–288 (QSYEQALLGW…LVVLLTDLFN (133 aa)). 2 disordered regions span residues 311-333 (NSFG…VQSN) and 355-446 (ASMH…DQLN). Over residues 319–333 (RRSTPPNEYQTVQSN) the composition is skewed to polar residues. Threonine 322 carries the post-translational modification Phosphothreonine. Residues 358 to 394 (HSQQQQQLHQQQQHQQQYHQQPLQQHPSQSQLQIQQQ) show a composition bias toward low complexity. The segment covering 404–419 (QAKEKTNVESKADERG) has biased composition (basic and acidic residues). Residues serine 422, serine 431, serine 441, serine 460, serine 463, and serine 466 each carry the phosphoserine modification. Positions 432-446 (QLTIENFGGSQDQLN) are enriched in polar residues. Residues 486–589 (LQLGYDTDSG…SMPASPAAWQ (104 aa)) are disordered. The residue at position 492 (threonine 492) is a Phosphothreonine. 4 positions are modified to phosphoserine: serine 494, serine 496, serine 513, and serine 530. Positions 495–507 (GSEKQDRETEKYS) are enriched in basic and acidic residues. The span at 513 to 529 (SVDNVPTVSSHNLSNAG) shows a compositional bias: polar residues. Residues 576–587 (SSTSSMPASPAA) show a composition bias toward low complexity. The stretch at 601–639 (ENASKLSTIRMKLEEKRRRIEQDKRKIEMALLRHQEKED) forms a coiled coil. Disordered stretches follow at residues 726 to 753 (VSAY…PMPM), 872 to 967 (QQHQ…GMPM), 1005 to 1042 (DFVH…YDSG), 1055 to 1186 (NLTY…NKYT), 1200 to 1241 (GAMS…NAEA), 1284 to 1315 (EAKA…EEQM), and 1335 to 1459 (EREG…GVER). 2 stretches are compositionally biased toward low complexity: residues 738–750 (PYQQ…QQQP) and 872–896 (QQHQ…SPGS). A compositionally biased stretch (gly residues) spans 902-914 (NGGGGGGGGGGGE). A compositionally biased stretch (polar residues) spans 919–947 (FQVQASPQHGQRQVSGSNGVQRQQSLTNL). 2 stretches are compositionally biased toward low complexity: residues 956–967 (PQNMGMPMGMPM) and 1008–1036 (HQQQ…GSSS). A phosphoserine mark is found at serine 1034, serine 1035, serine 1036, and serine 1067. Positions 1065-1074 (RPSIQANSFQ) are enriched in polar residues. Residues 1105 to 1116 (RPKPPLRAKRSP) show a composition bias toward basic residues. Polar residues predominate over residues 1167 to 1184 (GLNNSNSVKSPGNATYNK). The segment covering 1218 to 1230 (QSPQQTQQPMSPT) has biased composition (low complexity). Serine 1219 and serine 1228 each carry phosphoserine. A coiled-coil region spans residues 1277–1343 (QRRQQQEEAK…AEREGKTLDR (67 aa)). A compositionally biased stretch (basic and acidic residues) spans 1335–1348 (EREGKTLDRPDLHV). A compositionally biased stretch (basic residues) spans 1363–1374 (RQQRTTRPRPKT). Residues 1382–1400 (VDISEASSISSRGKKGSSS) are compositionally biased toward low complexity. A phosphoserine mark is found at serine 1398, serine 1399, and serine 1400. The span at 1401–1412 (NLTGYGQLSSNS) shows a compositional bias: polar residues. Over residues 1450-1459 (TSREPAGVER) the composition is skewed to basic and acidic residues. The 135-residue stretch at 1489–1623 (GPKLYKQPAA…QGKRVQLPSK (135 aa)) folds into the CKK domain.

The protein belongs to the CAMSAP1 family. Interacts with msps. Associates with the minus end of the microtubules.

The protein localises to the cytoplasm. Its subcellular location is the cytoskeleton. It localises to the microtubule organizing center. The protein resides in the spindle pole body. It is found in the centrosome. The protein localises to the perinuclear region. In terms of biological role, key microtubule-organizing protein that specifically binds the minus-end of microtubules and regulates their dynamics and organization. Involved in mitotic spindle assembly. Regulates microtubule (MT) severing. Antagonizes the activity of the kinesin-13 depolymerase Klp10A thereby switching off the depolymerization of the MTs at their pole-associated minus ends, which turns off poleward flux and induces anaphase B spindle elongation. Involved in asymmetric cell division of sensory organ precursor (SOP) cells by playing a role in the asymmetric localization of Sara-expressing endosomes to the pIIa daughter cell but not to the pIIb cell. Klp98A targets Sara-expressing endosomes to the central spindle which is symmetrically arranged in early cell division. During late cytokinesis, central spindle asymmetry is generated by enrichment of Patronin on the pIIb side which protects microtubules from depolymerization by Klp10A while unprotected microtubules on the pIIa side are disassembled by Klp10A, leading to the asymmetric delivery of Sara-expressing endosomes to the pIIa daughter cell. In fat body cells, part of perinuclear non-centrosomal microtubule-organizing centers (ncMTOCs) which function to accommodate the organization of microtubule (MT) networks to control nuclear positioning and dynein motor-based retrograde endosomal trafficking. Within the ncMTOC, Msp300 and shot anchors the ncMTOC at the nuclear surface and recruits the MT minus-end regulators Patronin and Nin for assembly, anchoring and/or stabilization of circumferential and radial MTs at the ncMTOCs. This protein, and perhaps Nin, recruits msps to the ncMTOC for the gamma-tubulin-independent elongation of radial MTs. The chain is Patronin (Patronin) from Drosophila melanogaster (Fruit fly).